The chain runs to 289 residues: MPSLKEIKERITSIKSTQKITSAMKMLASSKLKKAQYQMNCFLPYQRKLNAMLNSFLFCITDFKSDLTKKREIKRIALVIFSSNTSLCGTFNSNIIKLFNETISKYRYLNQKDIEVYTVGKKIEDYVRKLTFPLKVEGNYTQLIEKPNFARLKQLADKLLSDFLNQKIDKVELLYNHCKNAIFQTTNLEPYLPIQMKQPKSTSHADYIIEPDRDTVLNTLILRSLYSKIYAVLLNSVIAEHTARLVSMQIAIDNADEILEELTIQHNKQRQQTITNDLLDIISSSEALK.

This sequence belongs to the ATPase gamma chain family. As to quaternary structure, F-type ATPases have 2 components, CF(1) - the catalytic core - and CF(0) - the membrane proton channel. CF(1) has five subunits: alpha(3), beta(3), gamma(1), delta(1), epsilon(1). CF(0) has three main subunits: a, b and c.

The protein localises to the cell inner membrane. Produces ATP from ADP in the presence of a proton gradient across the membrane. The gamma chain is believed to be important in regulating ATPase activity and the flow of protons through the CF(0) complex. In Azobacteroides pseudotrichonymphae genomovar. CFP2, this protein is ATP synthase gamma chain.